A 146-amino-acid polypeptide reads, in one-letter code: Catabolic 3-dehydroquinase (146 aa).

Tyr24 functions as the Proton acceptor in the catalytic mechanism. Positions 78, 84, and 91 each coordinate substrate. The Proton donor role is filled by His104. Substrate is bound by residues 105 to 106 (IT) and Arg115.

Belongs to the type-II 3-dehydroquinase family. In terms of assembly, homododecamer. Adopts a ring-like structure, composed of an arrangement of two hexameric rings stacked on top of one another.

It carries out the reaction 3-dehydroquinate = 3-dehydroshikimate + H2O. It participates in aromatic compound metabolism; 3,4-dihydroxybenzoate biosynthesis; 3,4-dihydroxybenzoate from 3-dehydroquinate: step 1/2. In terms of biological role, is involved in the catabolism of quinate. Allows the utilization of quinate as carbon source via the beta-ketoadipate pathway. The protein is Catabolic 3-dehydroquinase of Meyerozyma guilliermondii (strain ATCC 6260 / CBS 566 / DSM 6381 / JCM 1539 / NBRC 10279 / NRRL Y-324) (Yeast).